The primary structure comprises 108 residues: uncharacterized protein (108 aa).

A helical membrane pass occupies residues 10–32 (LQAPYILCTSFITLKIHNFFFFF).

Its subcellular location is the membrane. This is an uncharacterized protein from Saccharomyces cerevisiae (strain ATCC 204508 / S288c) (Baker's yeast).